A 456-amino-acid chain; its full sequence is Phytase A (456 aa).

The signal sequence occupies residues 1-24; that stretch reads MSSMASVLFAALAISGVQVTPSRG. Glutamine 37, tyrosine 38, arginine 68, histidine 69, arginine 72, threonine 75, and arginine 152 together coordinate 1D-myo-inositol hexakisphosphate. 4 cysteine pairs are disulfide-bonded: cysteine 58–cysteine 396, cysteine 197–cysteine 450, cysteine 246–cysteine 264, and cysteine 421–cysteine 429. Histidine 69 serves as the catalytic Nucleophile. Lysine 283 contacts 1D-myo-inositol hexakisphosphate. An N-linked (GlcNAc...) asparagine glycan is attached at asparagine 317. Histidine 343 and aspartate 344 together coordinate 1D-myo-inositol hexakisphosphate. The N-linked (GlcNAc...) asparagine glycan is linked to asparagine 358.

This sequence belongs to the histidine acid phosphatase family. As to quaternary structure, monomer.

It localises to the secreted. It carries out the reaction 1D-myo-inositol hexakisphosphate + H2O = 1D-myo-inositol 1,2,4,5,6-pentakisphosphate + phosphate. The enzyme catalyses 1D-myo-inositol 1,2,4,5,6-pentakisphosphate + H2O = 1D-myo-inositol 1,2,5,6-tetrakisphosphate + phosphate. It catalyses the reaction 1D-myo-inositol 1,2,5,6-tetrakisphosphate + H2O = 1D-myo-inositol 1,2,6-trisphosphate + phosphate. The catalysed reaction is 1D-myo-inositol 1,2,6-trisphosphate + H2O = 1D-myo-inositol 1,2-bisphosphate + phosphate. It carries out the reaction 1D-myo-inositol 1,2-bisphosphate + H2O = 1D-myo-inositol 2-phosphate + phosphate. Its function is as follows. Catalyzes the phosphate monoester hydrolysis of phytic acid (myo-inositol hexakisphosphate), which results in the stepwise formation of myo-inositol pentakis-, tetrakis-, tris-, bis-, and monophosphates, as well as the liberation of inorganic phosphate. Myo-inositol 2-monophosphate is the end product. The polypeptide is Phytase A (Arthroderma benhamiae (strain ATCC MYA-4681 / CBS 112371) (Trichophyton mentagrophytes)).